The following is a 252-amino-acid chain: Carbohydrate deacetylase (252 aa).

Residues histidine 59 and histidine 122 each coordinate Mg(2+).

Belongs to the YdjC deacetylase family. In terms of assembly, homodimer. Mg(2+) is required as a cofactor.

In terms of biological role, probably catalyzes the deacetylation of acetylated carbohydrates an important step in the degradation of oligosaccharides. The polypeptide is Carbohydrate deacetylase (Vibrio vulnificus (strain CMCP6)).